A 363-amino-acid chain; its full sequence is Pyrimidine monooxygenase RutA (363 aa).

FMN is bound by residues 49–50 (IK), Asn115, Glu124, 140–141 (RY), and Ser190.

The protein belongs to the NtaA/SnaA/DszA monooxygenase family. RutA subfamily.

The catalysed reaction is uracil + FMNH2 + NADH + O2 = (Z)-3-ureidoacrylate + FMN + NAD(+) + H2O + H(+). It catalyses the reaction thymine + FMNH2 + NADH + O2 = (Z)-2-methylureidoacrylate + FMN + NAD(+) + H2O + H(+). In terms of biological role, catalyzes the pyrimidine ring opening between N-3 and C-4 by an unusual flavin hydroperoxide-catalyzed mechanism, adding oxygen atoms in the process to yield ureidoacrylate peracid, that immediately reacts with FMN forming ureidoacrylate and FMN-N(5)-oxide. The FMN-N(5)-oxide reacts spontaneously with NADH to produce FMN. Requires the flavin reductase RutF to regenerate FMN in vivo. This chain is Pyrimidine monooxygenase RutA, found in Pantoea ananatis (strain LMG 20103).